Consider the following 93-residue polypeptide: UPF0358 protein OB1428 (93 aa).

The protein belongs to the UPF0358 family.

The sequence is that of UPF0358 protein OB1428 from Oceanobacillus iheyensis (strain DSM 14371 / CIP 107618 / JCM 11309 / KCTC 3954 / HTE831).